A 285-amino-acid polypeptide reads, in one-letter code: PHO85 cyclin-7 (285 aa).

Residues 1 to 14 (MELSSPSKKTTTSP) show a composition bias toward low complexity. The segment at 1–42 (MELSSPSKKTTTSPINIPGGNRDNLIIGPHSHSFKTDPFSSN) is disordered. A Phosphoserine modification is found at serine 69.

This sequence belongs to the cyclin family. PHO80 subfamily. Forms a cyclin-CDK complex with PHO85. Interacts with the substrate proteins MMR1 and YJL084C. Interacts with the CDK inhibitor (CKI) PHO81.

It is found in the cytoplasm. Its activity is regulated as follows. The PCL7-PHO85 cyclin-CDK is inhibited by PHO81 in low-phosphate conditions. Its function is as follows. Cyclin partner of the cyclin-dependent kinase (CDK) PHO85. Together with cyclin PCL6, controls glycogen phosphorylase and glycogen synthase activities in response to nutrient availablility. The PCL7-PHO85 cyclin-CDK holoenzyme has GLC8 kinase activity and phosphorylates and inactivates the phosphatase PP1-2 inhibitor GLC8, causing activation of PP1-2, which then dephosphorylates and activates glycogen phosphorylase. PCL7-PHO85 also phosphorylates MMR1 and YJL084C. This Saccharomyces cerevisiae (strain ATCC 204508 / S288c) (Baker's yeast) protein is PHO85 cyclin-7 (PCL7).